The following is a 390-amino-acid chain: Pyruvate dehydrogenase E1 component subunit alpha, somatic form, mitochondrial (390 aa).

A mitochondrion-targeting transit peptide spans 1–29; that stretch reads MRKMLAAVSRVLSGASQKPASRVLVASRN. K63 is modified (N6-acetyllysine; alternate). K63 is subject to N6-succinyllysine; alternate. Residues H92, Y118, R119, A157, G165, V167, D196, G197, A198, N225, and Y227 each contribute to the pyruvate site. Positions 118 and 119 each coordinate thiamine diphosphate. G165, V167, D196, G197, A198, and N225 together coordinate thiamine diphosphate. D196 provides a ligand contact to Mg(2+). 2 residues coordinate Mg(2+): N225 and Y227. Residue S232 is modified to Phosphoserine; by PDK1. K244 is subject to N6-acetyllysine; alternate. K244 is modified (N6-succinyllysine; alternate). At K277 the chain carries N6-succinyllysine. Thiamine diphosphate is bound at residue H292. Position 293 is a phosphoserine; by PDK1, PDK2, PDK3 and PDK4 (S293). S295 is modified (phosphoserine). S300 carries the phosphoserine; by PDK1, PDK2, PDK3 and PDK4 modification. The residue at position 301 (Y301) is a Phosphotyrosine. K313 bears the N6-acetyllysine; alternate mark. At K313 the chain carries N6-succinyllysine; alternate. Residues K321 and K336 each carry the N6-acetyllysine modification. An N6-succinyllysine modification is found at K385.

As to quaternary structure, heterotetramer of two PDHA1 and two PDHB subunits. The heterotetramer interacts with DLAT, and is part of the multimeric pyruvate dehydrogenase complex that contains multiple copies of pyruvate dehydrogenase (E1), dihydrolipoamide acetyltransferase (DLAT, E2) and lipoamide dehydrogenase (DLD, E3). These subunits are bound to an inner core composed of about 48 DLAT and 12 PDHX molecules. The cofactor is thiamine diphosphate. Requires Mg(2+) as cofactor. Post-translationally, phosphorylation at Ser-232, Ser-293 and Ser-300 by PDK family kinases inactivates the enzyme; for this phosphorylation at a single site is sufficient. Phosphorylation at Ser-293 interferes with access to active site, and thereby inactivates the enzyme. Dephosphorylation at all three sites, i.e. at Ser-232, Ser-293 and Ser-300, is required for reactivation. Acetylation alters the phosphorylation pattern. Deacetylated by SIRT3.

The protein resides in the mitochondrion matrix. It catalyses the reaction N(6)-[(R)-lipoyl]-L-lysyl-[protein] + pyruvate + H(+) = N(6)-[(R)-S(8)-acetyldihydrolipoyl]-L-lysyl-[protein] + CO2. Pyruvate dehydrogenase activity is inhibited by phosphorylation of PDHA1; it is reactivated by dephosphorylation. In terms of biological role, the pyruvate dehydrogenase complex catalyzes the overall conversion of pyruvate to acetyl-CoA and CO(2), and thereby links the glycolytic pathway to the tricarboxylic cycle. This is Pyruvate dehydrogenase E1 component subunit alpha, somatic form, mitochondrial (PDHA1) from Macaca fascicularis (Crab-eating macaque).